Here is a 371-residue protein sequence, read N- to C-terminus: Proton-coupled zinc antiporter SLC30A2 (371 aa).

Residues Met-1–Lys-69 are Cytoplasmic-facing. A Mitochondrial localization signal motif is present at residues His-47–His-50. Cys-49 is a binding site for Zn(2+). The helical transmembrane segment at Leu-70–Leu-90 threads the bilayer. Residues Ala-91–Asp-99 lie on the Lumenal side of the membrane. The helical transmembrane segment at Ala-100–Ser-120 threads the bilayer. Zn(2+) is bound by residues His-102 and Asp-106. The Cytoplasmic portion of the chain corresponds to Ser-121 to Glu-136. Residues Ile-137–Leu-157 traverse the membrane as a helical segment. The Lumenal segment spans residues Ala-158–Asp-172. Residues Thr-173–His-193 traverse the membrane as a helical segment. Over Gln-194–Ala-219 the chain is Cytoplasmic. Residues Phe-220–Ile-240 form a helical membrane-spanning segment. The Zn(2+) site is built by His-222 and Asp-226. The Lumenal portion of the chain corresponds to Tyr-241–Tyr-248. The helical transmembrane segment at Val-249–Leu-269 threads the bilayer. At Arg-270 to His-303 the chain is on the cytoplasmic side. The Lysosomal targeting motif signature appears at Leu-293 to Leu-294. Position 295 is a phosphoserine (Ser-295). The Zn(2+) site is built by His-303, His-320, and Glu-354. Residues Ser-304 to Ala-324 form a helical membrane-spanning segment. Over Gln-325–Glu-371 the chain is Lumenal.

Belongs to the cation diffusion facilitator (CDF) transporter (TC 2.A.4) family. SLC30A subfamily. In terms of assembly, homodimer. Interacts (via lysosomal targeting motif) with AP3D1; in AP-3-mediated transport to lysosomes. Interacts with TMEM163. In terms of processing, phosphorylated at Ser-295. Phosphorylation at Ser-295 prevents localization to lysosomes. Dephosphorylation of Ser-295 which triggers localization to lysosomes, accumulation of zinc into lysosomes and lysosomal-mediated cell death is induced by TNF-alpha.

Its subcellular location is the cytoplasmic vesicle. The protein resides in the secretory vesicle membrane. It localises to the zymogen granule membrane. It is found in the endosome membrane. The protein localises to the lysosome membrane. Its subcellular location is the mitochondrion inner membrane. The protein resides in the cell membrane. It carries out the reaction Zn(2+)(in) + 2 H(+)(out) = Zn(2+)(out) + 2 H(+)(in). In terms of biological role, electroneutral proton-coupled antiporter concentrating zinc ions into a variety of intracellular organelles including endosomes, zymogen granules and mitochondria. Thereby, plays a crucial role in cellular zinc homeostasis to confer upon cells protection against its potential cytotoxicity. Regulates the zinc concentration of milk, through the transport of zinc ions into secretory vesicles of mammary cells. By concentrating zinc ions into lysosomes participates to lysosomal-mediated cell death during early mammary gland involution. Its function is as follows. Electroneutral proton-coupled antiporter mediating the efflux of zinc ions through the plasma membrane. This chain is Proton-coupled zinc antiporter SLC30A2, found in Mus musculus (Mouse).